The following is a 429-amino-acid chain: Cytochrome bc1 complex Rieske iron-sulfur subunit (429 aa).

Positions 1-45 are disordered; sequence MSRADDDAVGVPPTCGGRSDEEERRIVPGPNPQDGAKDGAKATAV. Transmembrane regions (helical) follow at residues 96 to 116, 137 to 157, and 207 to 227; these read VAVW…IFLF, PLYG…AVLY, and FGVG…GGLI. Positions 316–410 constitute a Rieske domain; that stretch reads RNPVMLIRIK…ITIDTDGYLV (95 aa). 4 residues coordinate [2Fe-2S] cluster: Cys-353, His-355, Cys-372, and His-375. Cys-358 and Cys-374 form a disulfide bridge.

The protein belongs to the Rieske iron-sulfur protein family. As to quaternary structure, the cytochrome bc1 complex is composed of a cytochrome b (QcrB), the Rieske iron-sulfur protein (QcrA) and a diheme cytochrome c (QcrC) subunit. [2Fe-2S] cluster serves as cofactor.

The protein localises to the cell membrane. Iron-sulfur subunit of the cytochrome bc1 complex, an essential component of the respiratory electron transport chain required for ATP synthesis. The bc1 complex catalyzes the oxidation of menaquinol and the reduction of cytochrome c in the respiratory chain. The bc1 complex operates through a Q-cycle mechanism that couples electron transfer to generation of the proton gradient that drives ATP synthesis. The chain is Cytochrome bc1 complex Rieske iron-sulfur subunit (qcrA) from Mycobacterium tuberculosis (strain CDC 1551 / Oshkosh).